We begin with the raw amino-acid sequence, 633 residues long: Phosphomethylpyrimidine synthase (633 aa).

Over residues 1 to 13 the composition is skewed to polar residues; sequence MNIRSNPDTTLPA. The disordered stretch occupies residues 1–20; that stretch reads MNIRSNPDTTLPAVTTGPLP. Residues asparagine 221, methionine 250, tyrosine 279, histidine 315, 335-337, 376-379, and glutamate 415 contribute to the substrate site; these read SRG and DGLR. A Zn(2+)-binding site is contributed by histidine 419. Tyrosine 442 is a substrate binding site. Histidine 483 contributes to the Zn(2+) binding site. [4Fe-4S] cluster contacts are provided by cysteine 563, cysteine 566, and cysteine 571.

Belongs to the ThiC family. In terms of assembly, homodimer. The cofactor is [4Fe-4S] cluster.

The enzyme catalyses 5-amino-1-(5-phospho-beta-D-ribosyl)imidazole + S-adenosyl-L-methionine = 4-amino-2-methyl-5-(phosphooxymethyl)pyrimidine + CO + 5'-deoxyadenosine + formate + L-methionine + 3 H(+). The protein operates within cofactor biosynthesis; thiamine diphosphate biosynthesis. In terms of biological role, catalyzes the synthesis of the hydroxymethylpyrimidine phosphate (HMP-P) moiety of thiamine from aminoimidazole ribotide (AIR) in a radical S-adenosyl-L-methionine (SAM)-dependent reaction. The sequence is that of Phosphomethylpyrimidine synthase from Bradyrhizobium sp. (strain ORS 278).